The chain runs to 125 residues: Small ribosomal subunit protein uS12 (125 aa).

Residue Asp89 is modified to 3-methylthioaspartic acid. Positions 104–125 (TAGVKDRSQSRSKYGAKASKQD) are disordered.

Belongs to the universal ribosomal protein uS12 family. As to quaternary structure, part of the 30S ribosomal subunit. Contacts proteins S8 and S17. May interact with IF1 in the 30S initiation complex.

Functionally, with S4 and S5 plays an important role in translational accuracy. In terms of biological role, interacts with and stabilizes bases of the 16S rRNA that are involved in tRNA selection in the A site and with the mRNA backbone. Located at the interface of the 30S and 50S subunits, it traverses the body of the 30S subunit contacting proteins on the other side and probably holding the rRNA structure together. The combined cluster of proteins S8, S12 and S17 appears to hold together the shoulder and platform of the 30S subunit. The sequence is that of Small ribosomal subunit protein uS12 from Prochlorococcus marinus (strain MIT 9303).